Here is a 995-residue protein sequence, read N- to C-terminus: uncharacterized protein (995 aa).

A signal peptide spans 1–30 (MFIHRMKSNLASLFLSFFLLLACEFTFSYA). N-linked (GlcNAc...) asparagine glycosylation is found at Asn-115, Asn-162, Asn-225, Asn-422, Asn-478, and Asn-486. Residue Glu-502 is part of the active site. N-linked (GlcNAc...) asparagine glycans are attached at residues Asn-546 and Asn-611. Catalysis depends on Asp-669, which acts as the Proton donor. N-linked (GlcNAc...) asparagine glycosylation is found at Asn-670, Asn-823, Asn-843, and Asn-986.

It belongs to the glycosyl hydrolase 31 family.

The protein resides in the spore wall. This is an uncharacterized protein from Schizosaccharomyces pombe (strain 972 / ATCC 24843) (Fission yeast).